A 274-amino-acid chain; its full sequence is 3-methyl-2-oxobutanoate hydroxymethyltransferase (274 aa).

Mg(2+) is bound by residues Asp44 and Asp83. 3-methyl-2-oxobutanoate contacts are provided by residues 44–45 (DS), Asp83, and Lys113. Glu115 contributes to the Mg(2+) binding site. Glu182 acts as the Proton acceptor in catalysis.

Belongs to the PanB family. As to quaternary structure, homodecamer; pentamer of dimers. The cofactor is Mg(2+).

It is found in the cytoplasm. The catalysed reaction is 3-methyl-2-oxobutanoate + (6R)-5,10-methylene-5,6,7,8-tetrahydrofolate + H2O = 2-dehydropantoate + (6S)-5,6,7,8-tetrahydrofolate. It functions in the pathway cofactor biosynthesis; (R)-pantothenate biosynthesis; (R)-pantoate from 3-methyl-2-oxobutanoate: step 1/2. Catalyzes the reversible reaction in which hydroxymethyl group from 5,10-methylenetetrahydrofolate is transferred onto alpha-ketoisovalerate to form ketopantoate. The protein is 3-methyl-2-oxobutanoate hydroxymethyltransferase of Campylobacter jejuni subsp. jejuni serotype O:6 (strain 81116 / NCTC 11828).